An 82-amino-acid chain; its full sequence is Exodeoxyribonuclease 7 small subunit (82 aa).

It belongs to the XseB family. As to quaternary structure, heterooligomer composed of large and small subunits.

The protein resides in the cytoplasm. It carries out the reaction Exonucleolytic cleavage in either 5'- to 3'- or 3'- to 5'-direction to yield nucleoside 5'-phosphates.. In terms of biological role, bidirectionally degrades single-stranded DNA into large acid-insoluble oligonucleotides, which are then degraded further into small acid-soluble oligonucleotides. In Sodalis glossinidius (strain morsitans), this protein is Exodeoxyribonuclease 7 small subunit.